The following is a 214-amino-acid chain: Probable transaldolase (214 aa).

Lysine 83 serves as the catalytic Schiff-base intermediate with substrate.

It belongs to the transaldolase family. Type 3B subfamily.

It is found in the cytoplasm. It catalyses the reaction D-sedoheptulose 7-phosphate + D-glyceraldehyde 3-phosphate = D-erythrose 4-phosphate + beta-D-fructose 6-phosphate. Its pathway is carbohydrate degradation; pentose phosphate pathway; D-glyceraldehyde 3-phosphate and beta-D-fructose 6-phosphate from D-ribose 5-phosphate and D-xylulose 5-phosphate (non-oxidative stage): step 2/3. In terms of biological role, transaldolase is important for the balance of metabolites in the pentose-phosphate pathway. The protein is Probable transaldolase of Leptospira biflexa serovar Patoc (strain Patoc 1 / Ames).